Consider the following 266-residue polypeptide: Large ribosomal subunit protein uL4 (266 aa).

This sequence belongs to the universal ribosomal protein uL4 family. In terms of assembly, part of the 50S ribosomal subunit.

Functionally, one of the primary rRNA binding proteins, this protein initially binds near the 5'-end of the 23S rRNA. It is important during the early stages of 50S assembly. It makes multiple contacts with different domains of the 23S rRNA in the assembled 50S subunit and ribosome. Forms part of the polypeptide exit tunnel. This is Large ribosomal subunit protein uL4 from Sulfolobus acidocaldarius (strain ATCC 33909 / DSM 639 / JCM 8929 / NBRC 15157 / NCIMB 11770).